Reading from the N-terminus, the 138-residue chain is Large ribosomal subunit protein bL17 (138 aa).

It belongs to the bacterial ribosomal protein bL17 family. As to quaternary structure, part of the 50S ribosomal subunit. Contacts protein L32.

In Halorhodospira halophila (strain DSM 244 / SL1) (Ectothiorhodospira halophila (strain DSM 244 / SL1)), this protein is Large ribosomal subunit protein bL17.